A 491-amino-acid polypeptide reads, in one-letter code: MSALLSESDLNDFISPALACVKPTQVSGGKKDNVNMNGEYEVSTEPDQLEKVSITLSDCLACSGCITSSEEILLSSQSHSVFLKNWGKLSQQQDKFLVVSVSPQCRLSLAQYYGLTLEAADLCLMNFFQKHFQCKYVVGTEMGRIISISKTVEKIIAHKKQKENTGADRKPLLSAVCPGFLIYTEKTKPQLAPMLLNVKSPQQITGSLIRATFESLAIARESFYHLSLMPCFDKKLEASRPESLGDGIDCVITPREIVTMLQELNLDFKSFLTEDTSLYGRLSPPGWDPRVHWASNLGGTCGGYAYQYVTAVQRLHPGSQMIVLEGRNSDIVEYRLLHDDRIIAAASELSGFRNIQNLVRKLTSGSGSERKRNITALRKRRTGPKANSREMAAVAAATADPYHSDYIEVNACPGACMNGGGLLNGEQNSLKRKQLVQTLNKRHGEELAMVDPLTLGPKLEEAAARPLSLEYVFAPVKQAVEKDLVSVGSTW.

The [4Fe-4S] cluster site is built by Cys-20, Cys-59, Cys-62, Cys-65, Cys-177, Cys-231, Cys-412, and Cys-416.

The protein belongs to the NARF family. In terms of assembly, interacts with CIA1.

Functionally, component of the cytosolic Fe/S protein assembly machinery. Required for maturation of extramitochondrial Fe/S proteins. May play a role in the transfer of pre-assembled Fe/S clusters to target apoproteins. This Saccharomyces cerevisiae (strain YJM789) (Baker's yeast) protein is Cytosolic Fe-S cluster assembly factor NAR1 (NAR1).